The chain runs to 423 residues: Histidine--tRNA ligase (423 aa).

It belongs to the class-II aminoacyl-tRNA synthetase family. In terms of assembly, homodimer.

It localises to the cytoplasm. It catalyses the reaction tRNA(His) + L-histidine + ATP = L-histidyl-tRNA(His) + AMP + diphosphate + H(+). This chain is Histidine--tRNA ligase, found in Halorhodospira halophila (strain DSM 244 / SL1) (Ectothiorhodospira halophila (strain DSM 244 / SL1)).